A 553-amino-acid polypeptide reads, in one-letter code: Formate--tetrahydrofolate ligase (553 aa).

Residue 65-72 (TPAGEGKS) participates in ATP binding.

This sequence belongs to the formate--tetrahydrofolate ligase family.

The catalysed reaction is (6S)-5,6,7,8-tetrahydrofolate + formate + ATP = (6R)-10-formyltetrahydrofolate + ADP + phosphate. It functions in the pathway one-carbon metabolism; tetrahydrofolate interconversion. This is Formate--tetrahydrofolate ligase from Brachyspira hyodysenteriae (strain ATCC 49526 / WA1).